Consider the following 429-residue polypeptide: Large ribosomal subunit protein mL37 (429 aa).

The transit peptide at 1-29 (MALRPVVLRRAPAHSRGILTRPGPPRPRG) directs the protein to the mitochondrion. The tract at residues 12–45 (PAHSRGILTRPGPPRPRGPLPRTPWTTRGPPPDQ) is disordered. The span at 22-33 (PGPPRPRGPLPR) shows a compositional bias: pro residues.

It belongs to the mitochondrion-specific ribosomal protein mL37 family. In terms of assembly, component of the mitochondrial ribosome large subunit (39S) which comprises a 16S rRNA and about 50 distinct proteins.

The protein resides in the mitochondrion. This chain is Large ribosomal subunit protein mL37 (MRPL37), found in Gallus gallus (Chicken).